The following is a 226-amino-acid chain: Probable septum site-determining protein MinC (226 aa).

Belongs to the MinC family. As to quaternary structure, interacts with MinD and FtsZ.

Functionally, cell division inhibitor that blocks the formation of polar Z ring septums. Rapidly oscillates between the poles of the cell to destabilize FtsZ filaments that have formed before they mature into polar Z rings. Prevents FtsZ polymerization. This chain is Probable septum site-determining protein MinC, found in Bacillus velezensis (strain DSM 23117 / BGSC 10A6 / LMG 26770 / FZB42) (Bacillus amyloliquefaciens subsp. plantarum).